A 356-amino-acid polypeptide reads, in one-letter code: UDP-N-acetylglucosamine--N-acetylmuramyl-(pentapeptide) pyrophosphoryl-undecaprenol N-acetylglucosamine transferase (356 aa).

Residues 15-17 (TGG), Asn-127, Arg-163, Ser-191, Ile-244, 263-268 (ALTVSE), and Gln-288 contribute to the UDP-N-acetyl-alpha-D-glucosamine site.

The protein belongs to the glycosyltransferase 28 family. MurG subfamily.

It is found in the cell inner membrane. It carries out the reaction di-trans,octa-cis-undecaprenyl diphospho-N-acetyl-alpha-D-muramoyl-L-alanyl-D-glutamyl-meso-2,6-diaminopimeloyl-D-alanyl-D-alanine + UDP-N-acetyl-alpha-D-glucosamine = di-trans,octa-cis-undecaprenyl diphospho-[N-acetyl-alpha-D-glucosaminyl-(1-&gt;4)]-N-acetyl-alpha-D-muramoyl-L-alanyl-D-glutamyl-meso-2,6-diaminopimeloyl-D-alanyl-D-alanine + UDP + H(+). It participates in cell wall biogenesis; peptidoglycan biosynthesis. Functionally, cell wall formation. Catalyzes the transfer of a GlcNAc subunit on undecaprenyl-pyrophosphoryl-MurNAc-pentapeptide (lipid intermediate I) to form undecaprenyl-pyrophosphoryl-MurNAc-(pentapeptide)GlcNAc (lipid intermediate II). The polypeptide is UDP-N-acetylglucosamine--N-acetylmuramyl-(pentapeptide) pyrophosphoryl-undecaprenol N-acetylglucosamine transferase (Klebsiella pneumoniae subsp. pneumoniae (strain ATCC 700721 / MGH 78578)).